Here is a 155-residue protein sequence, read N- to C-terminus: SsrA-binding protein (155 aa).

The segment covering 135–147 (TIKRRDQERDIKK) has biased composition (basic and acidic residues). Positions 135–155 (TIKRRDQERDIKKQMKHYNAR) are disordered.

It belongs to the SmpB family.

Its subcellular location is the cytoplasm. Functionally, required for rescue of stalled ribosomes mediated by trans-translation. Binds to transfer-messenger RNA (tmRNA), required for stable association of tmRNA with ribosomes. tmRNA and SmpB together mimic tRNA shape, replacing the anticodon stem-loop with SmpB. tmRNA is encoded by the ssrA gene; the 2 termini fold to resemble tRNA(Ala) and it encodes a 'tag peptide', a short internal open reading frame. During trans-translation Ala-aminoacylated tmRNA acts like a tRNA, entering the A-site of stalled ribosomes, displacing the stalled mRNA. The ribosome then switches to translate the ORF on the tmRNA; the nascent peptide is terminated with the 'tag peptide' encoded by the tmRNA and targeted for degradation. The ribosome is freed to recommence translation, which seems to be the essential function of trans-translation. The chain is SsrA-binding protein from Streptococcus pyogenes serotype M12 (strain MGAS2096).